The following is a 299-amino-acid chain: DNA-binding transcriptional activator HetR (299 aa).

Ser152 is a catalytic residue.

The protein belongs to the peptidase S48 family. As to quaternary structure, homodimer; disulfide-linked.

Its function is as follows. Might be involved in temporal and/or spatial regulation of nitrogen fixation. Dimerization is required for DNA-binding. Has both a protease and a DNA-binding activity. This Leptolyngbya boryana (Plectonema boryanum) protein is DNA-binding transcriptional activator HetR.